A 124-amino-acid polypeptide reads, in one-letter code: Small ribosomal subunit protein uS12 (124 aa).

A 3-methylthioaspartic acid modification is found at Asp-89.

It belongs to the universal ribosomal protein uS12 family. Part of the 30S ribosomal subunit. Contacts proteins S8 and S17. May interact with IF1 in the 30S initiation complex.

With S4 and S5 plays an important role in translational accuracy. Its function is as follows. Interacts with and stabilizes bases of the 16S rRNA that are involved in tRNA selection in the A site and with the mRNA backbone. Located at the interface of the 30S and 50S subunits, it traverses the body of the 30S subunit contacting proteins on the other side and probably holding the rRNA structure together. The combined cluster of proteins S8, S12 and S17 appears to hold together the shoulder and platform of the 30S subunit. This Erwinia amylovora (Fire blight bacteria) protein is Small ribosomal subunit protein uS12.